The primary structure comprises 207 residues: Thaumatin-like protein 1 (207 aa).

8 disulfides stabilise this stretch: Cys9-Cys202, Cys50-Cys60, Cys65-Cys71, Cys117-Cys191, Cys122-Cys174, Cys130-Cys140, Cys144-Cys153, and Cys154-Cys161.

It belongs to the thaumatin family. Monomer. Post-translationally, not glycosylated.

It localises to the secreted. Functionally, acidic thaumatin-like protein. Exhibits weak beta-1,3-glucanase activity with laminarin as substrate. The chain is Thaumatin-like protein 1 (TLP1) from Manilkara zapota (Sapodilla plum).